The chain runs to 314 residues: Putative peptide transport system permease protein BRA1092/BS1330_II1084 (314 aa).

6 helical membrane-spanning segments follow: residues 12–32, 101–121, 135–155, 177–197, 237–257, and 286–306; these read AIPV…LLPG, LALL…VVAA, LALL…VILF, WLRS…GYLA, VSVL…SVVI, and MLFL…LYTI. One can recognise an ABC transmembrane type-1 domain in the interval 95–304; sequence LPVTISLALL…AINVLVDILY (210 aa).

Belongs to the binding-protein-dependent transport system permease family. The complex is composed of two ATP-binding proteins (BRA1094), two transmembrane proteins (BRA1092 and BRA1093) and a solute-binding protein (BRA1090).

It is found in the cell inner membrane. Functionally, probably part of an ABC transporter complex that could be involved in peptide import. Probably responsible for the translocation of the substrate across the membrane. This is Putative peptide transport system permease protein BRA1092/BS1330_II1084 from Brucella suis biovar 1 (strain 1330).